Reading from the N-terminus, the 106-residue chain is Nucleoid-associated protein XCV1128 (106 aa).

A disordered region spans residues 81–106; the sequence is IDAESKDRMGSATAGMQLPPGMKLPF.

The protein belongs to the YbaB/EbfC family. Homodimer.

The protein resides in the cytoplasm. It is found in the nucleoid. Functionally, binds to DNA and alters its conformation. May be involved in regulation of gene expression, nucleoid organization and DNA protection. This chain is Nucleoid-associated protein XCV1128, found in Xanthomonas euvesicatoria pv. vesicatoria (strain 85-10) (Xanthomonas campestris pv. vesicatoria).